A 78-amino-acid chain; its full sequence is DNA-directed RNA polymerase subunit Rpo5 (78 aa).

Belongs to the archaeal Rpo5/eukaryotic RPB5 RNA polymerase subunit family. Part of the RNA polymerase complex.

Its subcellular location is the cytoplasm. It carries out the reaction RNA(n) + a ribonucleoside 5'-triphosphate = RNA(n+1) + diphosphate. Functionally, DNA-dependent RNA polymerase (RNAP) catalyzes the transcription of DNA into RNA using the four ribonucleoside triphosphates as substrates. This is DNA-directed RNA polymerase subunit Rpo5 from Methanococcus maripaludis (strain C6 / ATCC BAA-1332).